Here is a 412-residue protein sequence, read N- to C-terminus: Serine hydroxymethyltransferase (412 aa).

(6S)-5,6,7,8-tetrahydrofolate-binding positions include Leu117 and Gly121 to Leu123. Position 226 is an N6-(pyridoxal phosphate)lysine (Lys226). (6S)-5,6,7,8-tetrahydrofolate is bound at residue Ser349–Phe351.

This sequence belongs to the SHMT family. Homodimer. The cofactor is pyridoxal 5'-phosphate.

It localises to the cytoplasm. The enzyme catalyses (6R)-5,10-methylene-5,6,7,8-tetrahydrofolate + glycine + H2O = (6S)-5,6,7,8-tetrahydrofolate + L-serine. The protein operates within one-carbon metabolism; tetrahydrofolate interconversion. It functions in the pathway amino-acid biosynthesis; glycine biosynthesis; glycine from L-serine: step 1/1. In terms of biological role, catalyzes the reversible interconversion of serine and glycine with tetrahydrofolate (THF) serving as the one-carbon carrier. This reaction serves as the major source of one-carbon groups required for the biosynthesis of purines, thymidylate, methionine, and other important biomolecules. Also exhibits THF-independent aldolase activity toward beta-hydroxyamino acids, producing glycine and aldehydes, via a retro-aldol mechanism. The sequence is that of Serine hydroxymethyltransferase from Geobacillus kaustophilus (strain HTA426).